We begin with the raw amino-acid sequence, 350 residues long: MIEADRLITASPREREEQQDRAIRPLKLADYIGQPGVREQMELFIQAARGRAESLDHTLIFGPPGLGKTTLANIIAQEMGVSIKSTSGPVLERPGDLAALLTNLEAGDVLFVDEIHRLSPIVEEVLYPAMEDFQLDIMIGEGPAARSIKLDLPPFTLVGATTRAGMLTNPLRDRFGIVQRLEFYGIDDLATIVTRSAGILGLPIEDQGAYEIARRARGTPRIANRLLRRVRDFAEVRGRGHITREIADQALNLLDVDERGFDHSDRRLLLAMIEKFDGGPVGVDSLAAAISEERHTIEDVLEPYLIQQGYMMRTPRGRVVTRHAYLHFGLNTPKRLGEQPSGDLFAVSDE.

Residues 1-20 are disordered; the sequence is MIEADRLITASPREREEQQD. Residues 4-184 are large ATPase domain (RuvB-L); the sequence is ADRLITASPR…FGIVQRLEFY (181 aa). Residues Ile-23, Arg-24, Gly-65, Lys-68, Thr-69, Thr-70, 131 to 133, Arg-174, Tyr-184, and Arg-221 each bind ATP; that span reads EDF. Thr-69 is a binding site for Mg(2+). Positions 185-255 are small ATPAse domain (RuvB-S); the sequence is GIDDLATIVT…IADQALNLLD (71 aa). Positions 258–350 are head domain (RuvB-H); sequence ERGFDHSDRR…SGDLFAVSDE (93 aa). Residues Arg-294, Arg-313, and Arg-318 each contribute to the DNA site.

Belongs to the RuvB family. Homohexamer. Forms an RuvA(8)-RuvB(12)-Holliday junction (HJ) complex. HJ DNA is sandwiched between 2 RuvA tetramers; dsDNA enters through RuvA and exits via RuvB. An RuvB hexamer assembles on each DNA strand where it exits the tetramer. Each RuvB hexamer is contacted by two RuvA subunits (via domain III) on 2 adjacent RuvB subunits; this complex drives branch migration. In the full resolvosome a probable DNA-RuvA(4)-RuvB(12)-RuvC(2) complex forms which resolves the HJ.

The protein resides in the cytoplasm. The catalysed reaction is ATP + H2O = ADP + phosphate + H(+). The RuvA-RuvB-RuvC complex processes Holliday junction (HJ) DNA during genetic recombination and DNA repair, while the RuvA-RuvB complex plays an important role in the rescue of blocked DNA replication forks via replication fork reversal (RFR). RuvA specifically binds to HJ cruciform DNA, conferring on it an open structure. The RuvB hexamer acts as an ATP-dependent pump, pulling dsDNA into and through the RuvAB complex. RuvB forms 2 homohexamers on either side of HJ DNA bound by 1 or 2 RuvA tetramers; 4 subunits per hexamer contact DNA at a time. Coordinated motions by a converter formed by DNA-disengaged RuvB subunits stimulates ATP hydrolysis and nucleotide exchange. Immobilization of the converter enables RuvB to convert the ATP-contained energy into a lever motion, pulling 2 nucleotides of DNA out of the RuvA tetramer per ATP hydrolyzed, thus driving DNA branch migration. The RuvB motors rotate together with the DNA substrate, which together with the progressing nucleotide cycle form the mechanistic basis for DNA recombination by continuous HJ branch migration. Branch migration allows RuvC to scan DNA until it finds its consensus sequence, where it cleaves and resolves cruciform DNA. This chain is Holliday junction branch migration complex subunit RuvB, found in Ectopseudomonas mendocina (strain ymp) (Pseudomonas mendocina).